The chain runs to 46 residues: Esculentin-1A (46 aa).

A disulfide bridge connects residues Cys-40 and Cys-46.

The protein belongs to the frog skin active peptide (FSAP) family. Brevinin subfamily. In terms of tissue distribution, expressed by the skin glands.

The protein localises to the secreted. In terms of biological role, shows antibacterial activity against representative Gram-negative and Gram-positive bacterial species, and hemolytic activity. In Pelophylax lessonae (Pool frog), this protein is Esculentin-1A.